Here is a 548-residue protein sequence, read N- to C-terminus: Chaperonin GroEL (548 aa).

Residues 29–32 (TLGP), lysine 50, 86–90 (DGTTT), glycine 413, 479–481 (NAA), and aspartate 496 each bind ATP.

This sequence belongs to the chaperonin (HSP60) family. As to quaternary structure, forms a cylinder of 14 subunits composed of two heptameric rings stacked back-to-back. Interacts with the co-chaperonin GroES.

The protein resides in the cytoplasm. The enzyme catalyses ATP + H2O + a folded polypeptide = ADP + phosphate + an unfolded polypeptide.. In terms of biological role, together with its co-chaperonin GroES, plays an essential role in assisting protein folding. The GroEL-GroES system forms a nano-cage that allows encapsulation of the non-native substrate proteins and provides a physical environment optimized to promote and accelerate protein folding. The chain is Chaperonin GroEL from Deinococcus radiodurans (strain ATCC 13939 / DSM 20539 / JCM 16871 / CCUG 27074 / LMG 4051 / NBRC 15346 / NCIMB 9279 / VKM B-1422 / R1).